We begin with the raw amino-acid sequence, 665 residues long: tRNA 5-methylaminomethyl-2-thiouridine biosynthesis bifunctional protein MnmC (665 aa).

The interval M1 to I235 is tRNA (mnm(5)s(2)U34)-methyltransferase. The tract at residues I266 to H665 is FAD-dependent cmnm(5)s(2)U34 oxidoreductase.

In the N-terminal section; belongs to the methyltransferase superfamily. tRNA (mnm(5)s(2)U34)-methyltransferase family. The protein in the C-terminal section; belongs to the DAO family. It depends on FAD as a cofactor.

It is found in the cytoplasm. The catalysed reaction is 5-aminomethyl-2-thiouridine(34) in tRNA + S-adenosyl-L-methionine = 5-methylaminomethyl-2-thiouridine(34) in tRNA + S-adenosyl-L-homocysteine + H(+). Catalyzes the last two steps in the biosynthesis of 5-methylaminomethyl-2-thiouridine (mnm(5)s(2)U) at the wobble position (U34) in tRNA. Catalyzes the FAD-dependent demodification of cmnm(5)s(2)U34 to nm(5)s(2)U34, followed by the transfer of a methyl group from S-adenosyl-L-methionine to nm(5)s(2)U34, to form mnm(5)s(2)U34. This chain is tRNA 5-methylaminomethyl-2-thiouridine biosynthesis bifunctional protein MnmC, found in Pseudomonas syringae pv. syringae (strain B728a).